We begin with the raw amino-acid sequence, 100 residues long: uncharacterized protein (100 aa).

This is an uncharacterized protein from Borreliella burgdorferi (strain ATCC 35210 / DSM 4680 / CIP 102532 / B31) (Borrelia burgdorferi).